Here is a 484-residue protein sequence, read N- to C-terminus: tRNA sulfurtransferase (484 aa).

The THUMP domain maps to 62–166 (GPVIDELVRI…DDSYHIAHRR (105 aa)). ATP is bound by residues 184 to 185 (LI), Lys266, Gly288, and Gln297. The cysteines at positions 345 and 456 are disulfide-linked. Residues 404-482 (PSVDDVIIDV…GHGNIKVYAP (79 aa)) enclose the Rhodanese domain. Catalysis depends on Cys456, which acts as the Cysteine persulfide intermediate.

This sequence belongs to the ThiI family.

Its subcellular location is the cytoplasm. The catalysed reaction is [ThiI sulfur-carrier protein]-S-sulfanyl-L-cysteine + a uridine in tRNA + 2 reduced [2Fe-2S]-[ferredoxin] + ATP + H(+) = [ThiI sulfur-carrier protein]-L-cysteine + a 4-thiouridine in tRNA + 2 oxidized [2Fe-2S]-[ferredoxin] + AMP + diphosphate. It carries out the reaction [ThiS sulfur-carrier protein]-C-terminal Gly-Gly-AMP + S-sulfanyl-L-cysteinyl-[cysteine desulfurase] + AH2 = [ThiS sulfur-carrier protein]-C-terminal-Gly-aminoethanethioate + L-cysteinyl-[cysteine desulfurase] + A + AMP + 2 H(+). The protein operates within cofactor biosynthesis; thiamine diphosphate biosynthesis. Its function is as follows. Catalyzes the ATP-dependent transfer of a sulfur to tRNA to produce 4-thiouridine in position 8 of tRNAs, which functions as a near-UV photosensor. Also catalyzes the transfer of sulfur to the sulfur carrier protein ThiS, forming ThiS-thiocarboxylate. This is a step in the synthesis of thiazole, in the thiamine biosynthesis pathway. The sulfur is donated as persulfide by IscS. The chain is tRNA sulfurtransferase from Marinobacter nauticus (strain ATCC 700491 / DSM 11845 / VT8) (Marinobacter aquaeolei).